Reading from the N-terminus, the 295-residue chain is Maintenance of mitochondrial morphology protein 1 (295 aa).

The Lumenal portion of the chain corresponds to 1 to 12 (MVQLFHLTFTQG). Residues 13–33 (FFIGQLSVIVIVYIFLRFFLF) traverse the membrane as a helical segment. The Cytoplasmic portion of the chain corresponds to 34-295 (CTKEELKNVQ…REGHRQKSTE (262 aa)). The region spanning 81 to 278 (EEESLDWFNV…SPQFQQISIP (198 aa)) is the SMP-LTD domain.

It belongs to the MMM1 family. In terms of assembly, homodimer. Component of the ER-mitochondria encounter structure (ERMES) or MDM complex, composed of mmm1, mdm10, mdm12 and mdm34. A mmm1 homodimer associates with one molecule of mdm12 on each side in a pairwise head-to-tail manner, and the SMP-LTD domains of mmm1 and mdm12 generate a continuous hydrophobic tunnel for phospholipid trafficking.

Its subcellular location is the endoplasmic reticulum membrane. Its function is as follows. Component of the ERMES/MDM complex, which serves as a molecular tether to connect the endoplasmic reticulum (ER) and mitochondria. Components of this complex are involved in the control of mitochondrial shape and protein biogenesis, and function in nonvesicular lipid trafficking between the ER and mitochondria. The mdm12-mmm1 subcomplex functions in the major beta-barrel assembly pathway that is responsible for biogenesis of all outer membrane beta-barrel proteins, and acts in a late step after the SAM complex. The mdm10-mdm12-mmm1 subcomplex further acts in the TOM40-specific pathway after the action of the mdm12-mmm1 complex. Essential for establishing and maintaining the structure of mitochondria and maintenance of mtDNA nucleoids. The polypeptide is Maintenance of mitochondrial morphology protein 1 (Schizosaccharomyces japonicus (strain yFS275 / FY16936) (Fission yeast)).